Here is a 150-residue protein sequence, read N- to C-terminus: Lipoprotein signal peptidase (150 aa).

3 consecutive transmembrane segments (helical) span residues 5 to 25 (LSLVIIVVGIVADQIFKNWIV), 59 to 79 (QQWFFLILTPIVLVVALWFLW), and 83 to 103 (AQNWYFIGLTLIIAGALGNFI). Residues Asp-113 and Asp-129 contribute to the active site. Residues 124-144 (IFNIADILLSVGFVLLFIAIL) form a helical membrane-spanning segment.

This sequence belongs to the peptidase A8 family.

It localises to the cell membrane. The enzyme catalyses Release of signal peptides from bacterial membrane prolipoproteins. Hydrolyzes -Xaa-Yaa-Zaa-|-(S,diacylglyceryl)Cys-, in which Xaa is hydrophobic (preferably Leu), and Yaa (Ala or Ser) and Zaa (Gly or Ala) have small, neutral side chains.. The protein operates within protein modification; lipoprotein biosynthesis (signal peptide cleavage). In terms of biological role, this protein specifically catalyzes the removal of signal peptides from prolipoproteins. This Lactococcus lactis subsp. lactis (strain IL1403) (Streptococcus lactis) protein is Lipoprotein signal peptidase.